A 303-amino-acid chain; its full sequence is Pseudouridine-5'-phosphate glycosidase (303 aa).

E25 (proton donor) is an active-site residue. Residues K87 and V107 each coordinate substrate. D139 is a binding site for Mn(2+). 141-143 serves as a coordination point for substrate; sequence SAD. The active-site Nucleophile is the K160.

The protein belongs to the pseudouridine-5'-phosphate glycosidase family. In terms of assembly, homotrimer. Requires Mn(2+) as cofactor.

It catalyses the reaction D-ribose 5-phosphate + uracil = psi-UMP + H2O. Its function is as follows. Catalyzes the reversible cleavage of pseudouridine 5'-phosphate (PsiMP) to ribose 5-phosphate and uracil. Functions biologically in the cleavage direction, as part of a pseudouridine degradation pathway. This is Pseudouridine-5'-phosphate glycosidase from Hahella chejuensis (strain KCTC 2396).